Reading from the N-terminus, the 460-residue chain is Crocetin glucosyltransferase 2 (460 aa).

H19 acts as the Proton acceptor in catalysis. Residue H19 participates in an anthocyanidin binding. T133, Q333, H348, W351, N352, S353, E356, D372, and Q373 together coordinate UDP-alpha-D-glucose.

The protein belongs to the UDP-glycosyltransferase family. Mainly expressed in fully developed stigmas.

It carries out the reaction crocetin + UDP-alpha-D-glucose = beta-D-glucosyl crocetin + UDP. It catalyses the reaction beta-D-glucosyl crocetin + UDP-alpha-D-glucose = bis(beta-D-glucosyl) crocetin + UDP. The catalysed reaction is beta-D-gentiobiosyl crocetin + UDP-alpha-D-glucose = beta-D-gentiobiosyl beta-D-glucosyl crocetin + UDP. Its function is as follows. Crocetin glucosyltransferase involved in the synthesis of crocin, one of the apocarotenoids responsible for the color and bitter taste of saffron. This is Crocetin glucosyltransferase 2 (GLT2) from Crocus sativus (Saffron).